The primary structure comprises 451 residues: Trigger factor (451 aa).

One can recognise a PPIase FKBP-type domain in the interval 163–248 (GDIIDMEYTV…IKALYANILP (86 aa)).

It belongs to the FKBP-type PPIase family. Tig subfamily.

The protein localises to the cytoplasm. The enzyme catalyses [protein]-peptidylproline (omega=180) = [protein]-peptidylproline (omega=0). In terms of biological role, involved in protein export. Acts as a chaperone by maintaining the newly synthesized protein in an open conformation. Functions as a peptidyl-prolyl cis-trans isomerase. This Leptospira interrogans serogroup Icterohaemorrhagiae serovar copenhageni (strain Fiocruz L1-130) protein is Trigger factor.